We begin with the raw amino-acid sequence, 226 residues long: Cytidylate kinase (226 aa).

12 to 20 is an ATP binding site; that stretch reads GPSGAGKGT.

Belongs to the cytidylate kinase family. Type 1 subfamily.

The protein resides in the cytoplasm. The enzyme catalyses CMP + ATP = CDP + ADP. The catalysed reaction is dCMP + ATP = dCDP + ADP. The protein is Cytidylate kinase of Colwellia psychrerythraea (strain 34H / ATCC BAA-681) (Vibrio psychroerythus).